A 427-amino-acid chain; its full sequence is MNQTRSKALFKEAAVLIPGGVNSPVRAGKAVGTTPLFIDRAQGAEIVDADGNVYIDYIGSWGPMILGHRHSAVMAAIETVLKRGLSFGASTDLEARLARMVADAVPSIEMVRMVNSGTEATMSAIRLARGITGRDGLVKFDGCYHGHADMLLVDAGSGVATQAIPGSPGVPADVVRHTISLPYNNTAALKDCLDRKGEQIACVIVEPVAGNMGMVEPDPGFLSALRKETEKHGCLLIFDEVMSGFRVAYGGAQARYRITPDITCLGKVIGGGMPVGAYGGSRQIMKHIAPEGNIYQAGTLSGNPVAMAAGIATLSELKKPGVYEALEARTRRLADGLARAAADAGVPVQAHAVGAMLGLFFADRPVTDFASAKTSDLSRFAAYYRAMLEKGIFLAPSQFEAIFVSTAHTDDHIDRTVNAAKAVFADL.

The residue at position 267 (lysine 267) is an N6-(pyridoxal phosphate)lysine.

Belongs to the class-III pyridoxal-phosphate-dependent aminotransferase family. HemL subfamily. Homodimer. The cofactor is pyridoxal 5'-phosphate.

Its subcellular location is the cytoplasm. The catalysed reaction is (S)-4-amino-5-oxopentanoate = 5-aminolevulinate. It participates in porphyrin-containing compound metabolism; protoporphyrin-IX biosynthesis; 5-aminolevulinate from L-glutamyl-tRNA(Glu): step 2/2. This is Glutamate-1-semialdehyde 2,1-aminomutase from Desulfosudis oleivorans (strain DSM 6200 / JCM 39069 / Hxd3) (Desulfococcus oleovorans).